Here is a 66-residue protein sequence, read N- to C-terminus: Large ribosomal subunit protein bL31 (66 aa).

The Zn(2+) site is built by cysteine 16, cysteine 18, cysteine 36, and cysteine 39.

This sequence belongs to the bacterial ribosomal protein bL31 family. Type A subfamily. In terms of assembly, part of the 50S ribosomal subunit. Requires Zn(2+) as cofactor.

Binds the 23S rRNA. In Campylobacter jejuni subsp. jejuni serotype O:6 (strain 81116 / NCTC 11828), this protein is Large ribosomal subunit protein bL31.